We begin with the raw amino-acid sequence, 156 residues long: 6,7-dimethyl-8-ribityllumazine synthase (156 aa).

5-amino-6-(D-ribitylamino)uracil contacts are provided by residues Phe-22, 57 to 59 (AYE), and 81 to 83 (TVI). A (2S)-2-hydroxy-3-oxobutyl phosphate-binding site is contributed by 86–87 (GT). His-89 acts as the Proton donor in catalysis. Phe-114 serves as a coordination point for 5-amino-6-(D-ribitylamino)uracil. Residue Arg-128 coordinates (2S)-2-hydroxy-3-oxobutyl phosphate.

The protein belongs to the DMRL synthase family. As to quaternary structure, forms an icosahedral capsid composed of 60 subunits, arranged as a dodecamer of pentamers.

The catalysed reaction is (2S)-2-hydroxy-3-oxobutyl phosphate + 5-amino-6-(D-ribitylamino)uracil = 6,7-dimethyl-8-(1-D-ribityl)lumazine + phosphate + 2 H2O + H(+). It functions in the pathway cofactor biosynthesis; riboflavin biosynthesis; riboflavin from 2-hydroxy-3-oxobutyl phosphate and 5-amino-6-(D-ribitylamino)uracil: step 1/2. Functionally, catalyzes the formation of 6,7-dimethyl-8-ribityllumazine by condensation of 5-amino-6-(D-ribitylamino)uracil with 3,4-dihydroxy-2-butanone 4-phosphate. This is the penultimate step in the biosynthesis of riboflavin. In Salmonella heidelberg (strain SL476), this protein is 6,7-dimethyl-8-ribityllumazine synthase.